We begin with the raw amino-acid sequence, 262 residues long: UPF0758 protein BTH_I0781 (262 aa).

A disordered region spans residues 1 to 45; the sequence is MQYEIVSAGENVGDEPERERPVAQAAAAPGIPRPAALPAAGAARR. Residues 22–43 show a composition bias toward low complexity; that stretch reads VAQAAAAPGIPRPAALPAAGAA. Residues 140 to 262 enclose the MPN domain; the sequence is LVDSPGAVDD…TFSFAQAGWI (123 aa). Zn(2+)-binding residues include His-211, His-213, and Asp-224. Positions 211-224 match the JAMM motif motif; sequence HNHPSGAVRPSAAD.

The protein belongs to the UPF0758 family.

The protein is UPF0758 protein BTH_I0781 of Burkholderia thailandensis (strain ATCC 700388 / DSM 13276 / CCUG 48851 / CIP 106301 / E264).